The chain runs to 520 residues: MKEYWTSLASLLGVLAFCQSLMQSIFPPELRFAFLKFFNRIFHVFSSYCYFDITEIDGVNTNELYNAVQLYLSSSVSIAGNRLSLTRAVNSSSITFGLSNNDSIVDTFNGVTVLWEHVVTQRQTQTFAWRPLPEEKRGFTLRIKKKDKTLILNSYLDYIMERANEIRRKNQDRLLYTNSRGGSLDSRGHPWESVPFKHPSTFETLAMDPRKKQQIMDDLKDFAEGQVFYQKTGRAWKRGYLLYGPPGTGKSSMIAAMANYLGYDIYDLELTEVHSNSELRKLLMKTSSKSIIVIEDIDCSINLTNRKKNSSNVSSQRSYYDAETRNGSGSGSGGSGEEGGNGNTITLSGLLNFTDGLWSCCGSERIFVFTTNHIEKLDPALLRSGRMDMHIYMSFCNFPSLKILLKNYLGYGVEDINGDVLKEMEMVVEKAEMTPADVSEALIKNRRDKEKAIRELLEDLKSRGERNVKDGKLRGGSGNLTELEVVEEQEKRAIDSQNEDEDHDEEEIELEDNICKTRED.

Residues 1-24 (MKEYWTSLASLLGVLAFCQSLMQS) form the signal peptide. 244-251 (GPPGTGKS) provides a ligand contact to ATP. Disordered regions lie at residues 307 to 340 (KKNS…EEGG) and 467 to 520 (NVKD…TRED). Gly residues predominate over residues 328-340 (SGSGSGGSGEEGG). Over residues 497–512 (QNEDEDHDEEEIELED) the composition is skewed to acidic residues.

Belongs to the AAA ATPase family. BCS1 subfamily. Requires Mg(2+) as cofactor.

The catalysed reaction is ATP + H2O = ADP + phosphate + H(+). The sequence is that of AAA-ATPase At5g57480 from Arabidopsis thaliana (Mouse-ear cress).